A 286-amino-acid chain; its full sequence is Aquaporin PIP2-4 (286 aa).

2 consecutive transmembrane segments (helical) span residues 40 to 60 and 77 to 97; these read ALIAEFVATLLFLYVTVATVI and CGGVGVLGIAWAFGGMIFILV. An NPA 1 motif is present at residues 109-111; that stretch reads NPA. Transmembrane regions (helical) follow at residues 128 to 148, 170 to 190, and 204 to 224; these read LLYMAAQCLGAICGVALVKGF, GTGLAAEIIGTFVLVYTVFSA, and VLAPLPIGFAVFMVHLATIPI. The short motif at 230-232 is the NPA 2 element; the sequence is NPA. The helical transmembrane segment at 252–272 threads the bilayer; it reads IFWVGPFIGAAIAALYHQVIL.

This sequence belongs to the MIP/aquaporin (TC 1.A.8) family. PIP (TC 1.A.8.11) subfamily. Expressed in roots.

The protein resides in the cell membrane. In terms of biological role, water channel required to facilitate the transport of water across cell membrane. May play a role in root water uptake. This is Aquaporin PIP2-4 (PIP2-4) from Oryza sativa subsp. japonica (Rice).